The chain runs to 377 residues: 3-dehydroquinate synthase (377 aa).

Residues 115 to 119, 139 to 140, lysine 152, and lysine 162 each bind NAD(+); these read GVIGD and TS. 3 residues coordinate Zn(2+): glutamate 195, histidine 257, and histidine 276.

The protein belongs to the sugar phosphate cyclases superfamily. Dehydroquinate synthase family. Requires Co(2+) as cofactor. Zn(2+) is required as a cofactor. The cofactor is NAD(+).

It localises to the cytoplasm. The enzyme catalyses 7-phospho-2-dehydro-3-deoxy-D-arabino-heptonate = 3-dehydroquinate + phosphate. Its pathway is metabolic intermediate biosynthesis; chorismate biosynthesis; chorismate from D-erythrose 4-phosphate and phosphoenolpyruvate: step 2/7. Functionally, catalyzes the conversion of 3-deoxy-D-arabino-heptulosonate 7-phosphate (DAHP) to dehydroquinate (DHQ). The sequence is that of 3-dehydroquinate synthase from Rhizobium etli (strain ATCC 51251 / DSM 11541 / JCM 21823 / NBRC 15573 / CFN 42).